Reading from the N-terminus, the 165-residue chain is SsrA-binding protein (165 aa).

Belongs to the SmpB family.

It is found in the cytoplasm. Required for rescue of stalled ribosomes mediated by trans-translation. Binds to transfer-messenger RNA (tmRNA), required for stable association of tmRNA with ribosomes. tmRNA and SmpB together mimic tRNA shape, replacing the anticodon stem-loop with SmpB. tmRNA is encoded by the ssrA gene; the 2 termini fold to resemble tRNA(Ala) and it encodes a 'tag peptide', a short internal open reading frame. During trans-translation Ala-aminoacylated tmRNA acts like a tRNA, entering the A-site of stalled ribosomes, displacing the stalled mRNA. The ribosome then switches to translate the ORF on the tmRNA; the nascent peptide is terminated with the 'tag peptide' encoded by the tmRNA and targeted for degradation. The ribosome is freed to recommence translation, which seems to be the essential function of trans-translation. The chain is SsrA-binding protein from Ruthia magnifica subsp. Calyptogena magnifica.